A 337-amino-acid polypeptide reads, in one-letter code: Phosphatidate cytidylyltransferase, mitochondrial (337 aa).

The protein belongs to the TAM41 family. It depends on Mg(2+) as a cofactor.

The protein resides in the mitochondrion inner membrane. The enzyme catalyses a 1,2-diacyl-sn-glycero-3-phosphate + CTP + H(+) = a CDP-1,2-diacyl-sn-glycerol + diphosphate. It participates in phospholipid metabolism; CDP-diacylglycerol biosynthesis; CDP-diacylglycerol from sn-glycerol 3-phosphate: step 3/3. Functionally, catalyzes the conversion of phosphatidic acid (PA) to CDP-diacylglycerol (CDP-DAG), an essential intermediate in the synthesis of phosphatidylglycerol, cardiolipin and phosphatidylinositol. This is Phosphatidate cytidylyltransferase, mitochondrial (Tamm41) from Mus musculus (Mouse).